The primary structure comprises 467 residues: MKKLVLLQFLFFISFARGFTNVYPKPKYCPLLHEEDAGIPLFLTPLIENGKIDEARNKAVIQHKEVEAISSYAGFLTVNKKYNSNMFFWFFPALHDPKTAPVVLWLQGGPGATSMYGLFLENGPFIVTKNKTLKMREYSWNKCHNLLYIDNPVGTGFSFTEDERGYATNETHVGRDVHTALVQFFELFPELQTNDFYVTGESYGGKYVPAVSHAIKDYNIKAKIKINLKGLAIGNGLTDPVNQLDYGDYLYQLGLLDANGRNLFQKYEEQGKNLIKQEKWLEAFDLFDELLDGDITQQPSLYKNLTGFDYYFNYLHEKDPSNDSDYMVEWLQRADVRKAIHVGNRTFIPESKKVEKYMKADVMQSLAVLIADLTQHYRVLIYNGQLDIIVAYPLTENYLQKLKWPGAEKYKTAQRKVWFVGNELAGYSKTVDSLTEVLVRNAGHMVPLDQPKWALDLITRFTHNKGF.

Positions 1–18 (MKKLVLLQFLFFISFARG) are cleaved as a signal peptide. 2 N-linked (GlcNAc...) asparagine glycosylation sites follow: N130 and N169. S202 is a catalytic residue. Residues N304, N322, and N344 are each glycosylated (N-linked (GlcNAc...) asparagine). Catalysis depends on residues D387 and H444.

It belongs to the peptidase S10 family. As to expression, expressed by the venom duct.

It localises to the secreted. It carries out the reaction Release of a C-terminal amino acid with broad specificity.. The protein is Venom serine carboxypeptidase of Apis mellifera (Honeybee).